Reading from the N-terminus, the 350-residue chain is Flap endonuclease 1 (350 aa).

Residues 1 to 102 (MGVTALRELI…REIERRQKLK (102 aa)) form an N-domain region. Residues aspartate 31, aspartate 84, glutamate 156, glutamate 158, aspartate 177, aspartate 179, and aspartate 240 each coordinate Mg(2+). Residues 120–261 (EARKYAQMSA…TALRYVKSYG (142 aa)) are I-domain. Residues 339–347 (KQSTLDMFF) form an interaction with PCNA region.

This sequence belongs to the XPG/RAD2 endonuclease family. FEN1 subfamily. Interacts with PCNA. PCNA stimulates the nuclease activity without altering cleavage specificity. The cofactor is Mg(2+).

Its function is as follows. Structure-specific nuclease with 5'-flap endonuclease and 5'-3' exonuclease activities involved in DNA replication and repair. During DNA replication, cleaves the 5'-overhanging flap structure that is generated by displacement synthesis when DNA polymerase encounters the 5'-end of a downstream Okazaki fragment. Binds the unpaired 3'-DNA end and kinks the DNA to facilitate 5' cleavage specificity. Cleaves one nucleotide into the double-stranded DNA from the junction in flap DNA, leaving a nick for ligation. Also involved in the base excision repair (BER) pathway. Acts as a genome stabilization factor that prevents flaps from equilibrating into structures that lead to duplications and deletions. Also possesses 5'-3' exonuclease activity on nicked or gapped double-stranded DNA. This chain is Flap endonuclease 1, found in Ignicoccus hospitalis (strain KIN4/I / DSM 18386 / JCM 14125).